The primary structure comprises 359 residues: NADPH HC-toxin reductase 2 (359 aa).

NADP(+) is bound by residues Arg-39, 67 to 68 (DL), 87 to 89 (VAT), Tyr-177, Lys-181, 206 to 209 (LGLV), and Thr-221. The active-site Proton donor is the Lys-181.

The protein belongs to the NAD(P)-dependent epimerase/dehydratase family.

Functionally, in tandem with Hm1, NADPH-dependent HC toxin reductase (HCTR), which inactivates HC toxin, a cyclic tetrapeptide produced by the fungus Cochliobolus carbonum to permit infection and acting as an inhibitor of host histone deacetylases (HDACs), thus conferring resistance against C.carbonum race 1 in resistant cultivars (e.g. cv. B73 and cv. Wisconsin 22). Catalyzes the production of 8-hydroxy derivative of HC-toxin via the reduction of the 8-keto group of 2-amino-9,10-epoxy-8-oxo-decanoic acid, an amino acid of the HC-toxin. In Zea mays (Maize), this protein is NADPH HC-toxin reductase 2.